We begin with the raw amino-acid sequence, 357 residues long: tRNA-specific 2-thiouridylase MnmA (357 aa).

Residues 3 to 10 and leucine 29 each bind ATP; that span reads AMSGGVDS. The active-site Nucleophile is the cysteine 98. A disulfide bridge connects residues cysteine 98 and cysteine 196. Glycine 122 is an ATP binding site. Residues 146–148 are interaction with tRNA; sequence KDQ. The Cysteine persulfide intermediate role is filled by cysteine 196. The interaction with tRNA stretch occupies residues 302–303; the sequence is RY.

This sequence belongs to the MnmA/TRMU family.

The protein localises to the cytoplasm. The enzyme catalyses S-sulfanyl-L-cysteinyl-[protein] + uridine(34) in tRNA + AH2 + ATP = 2-thiouridine(34) in tRNA + L-cysteinyl-[protein] + A + AMP + diphosphate + H(+). Its function is as follows. Catalyzes the 2-thiolation of uridine at the wobble position (U34) of tRNA, leading to the formation of s(2)U34. In Moorella thermoacetica (strain ATCC 39073 / JCM 9320), this protein is tRNA-specific 2-thiouridylase MnmA.